Here is a 507-residue protein sequence, read N- to C-terminus: ATP synthase subunit alpha, chloroplastic (507 aa).

Glycine 170–threonine 177 contributes to the ATP binding site.

Belongs to the ATPase alpha/beta chains family. As to quaternary structure, F-type ATPases have 2 components, CF(1) - the catalytic core - and CF(0) - the membrane proton channel. CF(1) has five subunits: alpha(3), beta(3), gamma(1), delta(1), epsilon(1). CF(0) has four main subunits: a, b, b' and c.

It is found in the plastid. The protein resides in the chloroplast thylakoid membrane. It catalyses the reaction ATP + H2O + 4 H(+)(in) = ADP + phosphate + 5 H(+)(out). In terms of biological role, produces ATP from ADP in the presence of a proton gradient across the membrane. The alpha chain is a regulatory subunit. The protein is ATP synthase subunit alpha, chloroplastic of Spinacia oleracea (Spinach).